A 5537-amino-acid chain; its full sequence is Histone-lysine N-methyltransferase 2D (5537 aa).

The segment at 1-60 is disordered; that stretch reads MDSQKLAGEDKDSEPAADGPAASEDPSATESDLPNPHVGEVSVLSSGSPRLQETPQDCSG. Ser-27 is subject to Phosphoserine. Over residues 43-57 the composition is skewed to polar residues; it reads VLSSGSPRLQETPQD. The segment at 104–149 adopts a C2HC pre-PHD-type 1; degenerate zinc-finger fold; sequence GPNEAVLPSEDLSQIGFPEGLTPAHLGEPGGSCWAHHWCAAWSAGV. 3 PHD-type zinc fingers span residues 170-218, 226-276, and 273-323; these read QRCS…PEHS, EARC…CKVC, and CKVC…CRVC. The segment at 229–274 adopts an RING-type 1; atypical zinc-finger fold; sequence CAVCEGPGELCDLFFCTSCGHHYHGACLDTALTARKRAGWQCPECK. An RING-type 2; degenerate zinc finger spans residues 276–321; that stretch reads CQACRKPGNDSKMLVCETCDKGYHTFCLKPPMEELPAHSWKCKACR. 4 disordered regions span residues 368–387, 393–416, 436–1331, and 1340–1359; these read VCSR…EPDA, QGQP…QCEA, EEMP…RLKS, and VVAD…DDDT. Residues 439-668 are 15 X 5 AA repeats of S/P-P-P-E/P-E/A; it reads PLLPPPEESP…VSRLSPPPEE (230 aa). The segment covering 440–473 has biased composition (pro residues); sequence LLPPPEESPLSPPPEESPTSPPPEASRLSPPPEE. 3 repeat units span residues 442–446, 460–464, and 469–473. Over residues 474 to 483 the composition is skewed to low complexity; sequence LPASPLPEAL. Over residues 494–509 the composition is skewed to pro residues; it reads LSPPPEESPLSPPPES. 2 consecutive repeat copies span residues 496-500 and 504-508. Residues 510 to 519 are compositionally biased toward low complexity; sequence SPFSPLEESP. 2 stretches are compositionally biased toward pro residues: residues 520–547 and 554–595; these read LSPP…PLSP and LSPP…PPPE. A run of 5 repeats spans residues 521-525, 555-559, 564-568, 573-577, and 582-586. The span at 596-607 shows a compositional bias: low complexity; it reads ASRLFPPFEESP. The segment covering 608-649 has biased composition (pro residues); sequence LSPPPEESPLSPPPEASRLSPPPEDSPMSPPPEESPMSPPPE. Repeat copies occupy residues 609–613, 618–622, 627–631, and 645–649. Residues 650–662 are compositionally biased toward low complexity; sequence VSRLSPLPVVSRL. Repeat 15 spans residues 663-667; it reads SPPPE. Pro residues predominate over residues 663 to 712; it reads SPPPEESPLSPPPEESPTSPPPEASRLSPPPEDSPTSPPPEDSPASPPPE. The segment covering 713 to 725 has biased composition (low complexity); sequence DSLMSLPLEESPL. Phosphoserine is present on Ser-744. 2 stretches are compositionally biased toward basic and acidic residues: residues 745-760 and 845-869; these read PRPE…EEPH and RPEE…KPPE. 2 stretches are compositionally biased toward low complexity: residues 889-903 and 911-928; these read PSLS…LSEP and LPEE…LSPQ. The segment covering 929–940 has biased composition (pro residues); the sequence is LMPPDPLPPPLS. Residues 941–954 are compositionally biased toward low complexity; the sequence is PIITAAAPPALSPL. The span at 994–1008 shows a compositional bias: pro residues; sequence EPVPPMILPPSPGSP. Low complexity predominate over residues 1048–1057; the sequence is PLSVPSPLSP. A compositionally biased stretch (basic and acidic residues) spans 1068 to 1080; that stretch reads AELHEMETEKVSE. Ser-1151 bears the Phosphoserine mark. Thr-1195 is modified (phosphothreonine). Positions 1207-1216 are enriched in polar residues; the sequence is EISNLSQGDA. Ser-1249 bears the Phosphoserine mark. At Thr-1267 the chain carries Phosphothreonine. Ser-1270 carries the phosphoserine modification. Basic residues-rich tracts occupy residues 1289–1302 and 1310–1329; these read GRRR…RIKQ and GRRR…RARL. 3 consecutive PHD-type zinc fingers follow at residues 1377–1430, 1427–1477, and 1504–1559; these read QDMC…CIVC, CIVC…CVSC, and LVTC…CQPY. Residues 1507–1557 form an RING-type 3; atypical zinc finger; the sequence is CPICHAPYVEEDLLIQCRHCERWMHAGCESLFTEDDVEQAADEGFDCVSCQ. A Phosphoserine modification is found at Ser-1606. Disordered stretches follow at residues 1610 to 1767, 1793 to 1889, 1904 to 2002, and 2165 to 2683; these read KRRQ…LEDM, GVGR…MESK, EQHL…NQRS, and PQVP…QRQR. Basic and acidic residues predominate over residues 1637–1666; sequence PDDKKDGDLDTDELLKGEGGVEHMECEIKL. Ser-1671 carries the post-translational modification Phosphoserine. Basic and acidic residues predominate over residues 1675–1685; it reads EPGKEETEESK. Composition is skewed to basic residues over residues 1702-1712 and 1753-1762; these read RQRKSHTRTKK and KQQRRGRKKS. Basic and acidic residues-rich tracts occupy residues 1806 to 1825 and 1832 to 1841; these read AKGD…KGDD and EESRGLEGKA. 2 positions are modified to phosphoserine: Ser-1820 and Ser-1834. 2 positions are modified to phosphothreonine: Thr-1843 and Thr-1865. Over residues 1874–1889 the composition is skewed to basic and acidic residues; the sequence is DLDRISTEELPKMESK. The span at 1979-1990 shows a compositional bias: low complexity; the sequence is TTPSTPTTPTTE. Residues 2190-2209 show a composition bias toward pro residues; that stretch reads PTAPPTYPPYPSPTGAPAQP. Ser-2239 carries the phosphoserine modification. The residue at position 2240 (Thr-2240) is a Phosphothreonine. Lys-2246 bears the N6-acetyllysine mark. A phosphoserine mark is found at Ser-2260 and Ser-2274. Basic and acidic residues predominate over residues 2280–2292; the sequence is ESRKALEVKKEEL. Residues Ser-2309, Ser-2311, and Ser-2342 each carry the phosphoserine modification. Composition is skewed to pro residues over residues 2350–2365 and 2379–2393; these read QEPP…PPSH and AQPP…PPPE. Composition is skewed to low complexity over residues 2409 to 2431 and 2494 to 2505; these read SRVP…RPLS and FPAALPAGPAGE. Position 2535 is an asymmetric dimethylarginine (Arg-2535). A compositionally biased stretch (pro residues) spans 2547–2560; it reads LKPPVPQPGLPPPH. The span at 2574–2584 shows a compositional bias: polar residues; that stretch reads KPQSTNYTVAT. A compositionally biased stretch (low complexity) spans 2589–2609; it reads PSGSPLGPSSGSTGESYGLSP. Pro residues predominate over residues 2610 to 2621; the sequence is LRPPSVLPPPAP. Ser-2640 bears the Phosphoserine mark. Residues 2669–2707 are a coiled coil; sequence MSGLSQTELEKQRQRQRLRELLIRQQIQRNTLRQEKETA. An LXXLL motif 1 motif is present at residues 2686–2690; that stretch reads LRELL. Disordered stretches follow at residues 2697 to 2814 and 2835 to 2996; these read RNTL…QQQQ and ARFP…LDDD. Positions 2707-2722 are enriched in low complexity; sequence AAAAAGAVGPPGSWGA. Polar residues-rich tracts occupy residues 2733 to 2746 and 2781 to 2790; these read SRGQ…QDKS and PSSMDVNSRQ. An Asymmetric dimethylarginine modification is found at Arg-2836. The span at 2931–2940 shows a compositional bias: pro residues; it reads PQKPSAPPAP. An LXXLL motif 2 motif is present at residues 3038–3042; it reads LDDLL. The tract at residues 3078 to 3110 is disordered; that stretch reads EKAEREALLRGVEPGPLGPEERPPPAADASEPR. Residue Lys-3079 is modified to N6-acetyllysine. Ser-3130 is modified (phosphoserine). Disordered regions lie at residues 3147–3209 and 3263–3339; these read ANSL…GSSL and KQQL…AHAL. Phosphothreonine is present on Thr-3197. Composition is skewed to low complexity over residues 3198-3209, 3263-3289, and 3301-3320; these read PSPLSGPGGSSL, KQQL…LSAP, and GSSP…LAGA. A Phosphoserine modification is found at Ser-3199. Positions 3249 to 3282 form a coiled coil; sequence IEDLLEHEKKELQKKQQLSAQLQPAQQQQQQQQQ. A compositionally biased stretch (pro residues) spans 3325 to 3334; the sequence is LPQPLMPTQP. Lys-3433 carries the N6-acetyllysine modification. Disordered stretches follow at residues 3462 to 3499 and 3596 to 3673; these read LSGG…TFAQ and RNKQ…GPFL. Positions 3562–3614 form a coiled coil; sequence EKLKLVTEQQSKIQKQLDQVRKQQKEHTNLMAEYRNKQQQQQQQQQQQQQQHS. 2 stretches are compositionally biased toward low complexity: residues 3599 to 3612 and 3631 to 3643; these read QQQQ…QQQQ and LPGQ…GLQP. A coiled-coil region spans residues 3714 to 3750; the sequence is RLLQERQLQLQQQRMQLAQKLQQQQQQQQQQQHLLGQ. Residue Arg-3727 is modified to Asymmetric dimethylarginine. The tract at residues 3758 to 3802 is disordered; sequence QQGPGVQTNQALGPKPQGLMPPSSHQGLLVQQLSPQPPQGPQGML. A coiled-coil region spans residues 3897–3975; sequence LQQLQQQQQL…FQQQQQQQQM (79 aa). The interval 3984-4191 is disordered; sequence LLSPQQQQQQ…GQGLPGVGIM (208 aa). The segment covering 4012–4023 has biased composition (low complexity); it reads PGALGPTLLLTG. The segment covering 4024–4045 has biased composition (polar residues); the sequence is KEQNTVDPAVSSEATEGPSTHQ. Over residues 4073–4108 the composition is skewed to low complexity; that stretch reads SQLLLVQPQPQPQPSSLQLQPPLRLPGQQQQQVSLL. Over residues 4111–4120 the composition is skewed to gly residues; it reads AGGGSHGQLG. Residues 4137–4154 show a composition bias toward polar residues; that stretch reads PSVSLGDQPGSMTQNLLG. Arg-4198 carries the asymmetric dimethylarginine modification. A Phosphoserine modification is found at Ser-4215. The short motif at 4222–4226 is the LXXLL motif 3 element; that stretch reads LQALL. Disordered stretches follow at residues 4233–4398 and 4410–4452; these read QSQA…VPGH and ASQL…LLLA. A compositionally biased stretch (polar residues) spans 4237–4251; that stretch reads VRQTPPYQEPGTQTS. Residues 4252–4282 show a composition bias toward low complexity; sequence PLQGLLGCQPQLGGFPGPQTGPLQELGAGPR. The LXXLL motif 4 signature appears at 4253–4257; that stretch reads LQGLL. A compositionally biased stretch (pro residues) spans 4283 to 4293; that stretch reads PQGPPRLPAPP. Composition is skewed to low complexity over residues 4294–4305 and 4320–4331; these read GALSTGPVLGPV and PSQLPSPSSQLP. Residues 4338-4357 show a composition bias toward pro residues; sequence PTHPGTPKPQGPTLEPPPGR. Ser-4359 carries the post-translational modification Phosphoserine. Residues 4463-4467 carry the LXXLL motif 5 motif; sequence LQKLL. Residue Lys-4465 is modified to N6-acetyllysine. Disordered stretches follow at residues 4503–4544 and 4613–4727; these read QGTP…KEDG and KNNL…HLGS. A compositionally biased stretch (pro residues) spans 4619-4633; sequence PPTPPSSLPPTPPPS. Positions 4648-4673 are enriched in basic and acidic residues; it reads LGEHPKDAASARDSERALRDTSEVKS. Position 4738 is a phosphoserine (Ser-4738). A Glycyl lysine isopeptide (Lys-Gly) (interchain with G-Cter in SUMO2) cross-link involves residue Lys-4756. Position 4776 is an N6-acetyllysine (Lys-4776). Phosphoserine is present on residues Ser-4822 and Ser-4849. Positions 4822–4857 are disordered; the sequence is SPARAGTEPKKGEAEGPGGKEKGLEGKSPDTGPDWL. Basic and acidic residues predominate over residues 4828–4849; the sequence is TEPKKGEAEGPGGKEKGLEGKS. Lys-4880 participates in a covalent cross-link: Glycyl lysine isopeptide (Lys-Gly) (interchain with G-Cter in SUMO2). Residues 4905-4980 are disordered; that stretch reads QLSAPPPEEP…GEDSRPPRLK (76 aa). A compositionally biased stretch (pro residues) spans 4908–4931; the sequence is APPPEEPSPPPSPLAPSPASPPTE. Low complexity predominate over residues 4932 to 4941; sequence PLVELPTEPL. Basic and acidic residues predominate over residues 4966 to 4976; that stretch reads RPPEEGEDSRP. The LXXLL motif 6 signature appears at 4990–4994; the sequence is LRLLL. Residues 5029 to 5069 form a C2HC pre-PHD-type 2 zinc finger; that stretch reads MRRCCFCHEEGDGATDGPARLLNLDLDLWVHLNCALWSTEV. The PHD-type 7 zinc-finger motif lies at 5090-5137; sequence TKCSLCQRTGATSSCNRMRCPNVYHFACAIRAKCMFFKDKTMLCPMHK. The FYR N-terminal domain occupies 5175 to 5235; sequence LHMFRVGGLV…CCYRCSIGEN (61 aa). The 86-residue stretch at 5236-5321 folds into the FYR C-terminal domain; sequence NGRPEFVIKV…ESCQNYLFRY (86 aa). A WDR5 interaction motif (WIN) motif is present at residues 5337–5342; that stretch reads GCARSE. Residues 5397–5513 form the SET domain; the sequence is NNVYLARSRI…KGEELTYDYQ (117 aa). Residues Tyr-5451 and 5474–5475 contribute to the S-adenosyl-L-methionine site; that span reads NH. Zn(2+) is bound by residues Cys-5477, Cys-5525, Cys-5527, and Cys-5532. One can recognise a Post-SET domain in the interval 5521–5537; sequence HKIPCHCGAWNCRKWMN.

The protein belongs to the class V-like SAM-binding methyltransferase superfamily. Histone-lysine methyltransferase family. TRX/MLL subfamily. As to quaternary structure, component of the MLL2 complex (also named ASCOM complex), at least composed of catalytic subunit KMT2D/MLL2, ASH2L, RBBP5, WDR5, NCOA6, DPY30, KDM6A, PAXIP1/PTIP, PAGR1 and alpha- and beta-tubulin. Forms a core complex with the evolutionary conserved subcomplex WRAD composed of WDR5, RBBP5, ASH2L/ASH2 and DPY30 subunits; WRAD differentially stimulates the methyltransferase activity. Interacts with ESR1; interaction is direct. Interacts (via WIN motif) with WDR5. Expressed in most adult tissues, including a variety of hematoipoietic cells, with the exception of the liver.

It localises to the nucleus. It carries out the reaction L-lysyl(4)-[histone H3] + S-adenosyl-L-methionine = N(6)-methyl-L-lysyl(4)-[histone H3] + S-adenosyl-L-homocysteine + H(+). Histone methyltransferase that catalyzes methyl group transfer from S-adenosyl-L-methionine to the epsilon-amino group of 'Lys-4' of histone H3 (H3K4). Part of chromatin remodeling machinery predominantly forms H3K4me1 methylation marks at active chromatin sites where transcription and DNA repair take place. Acts as a coactivator for estrogen receptor by being recruited by ESR1, thereby activating transcription. The protein is Histone-lysine N-methyltransferase 2D (KMT2D) of Homo sapiens (Human).